Reading from the N-terminus, the 527-residue chain is Peptide chain release factor 3 (527 aa).

The region spanning 9–277 (AKRRTFAIIS…AVVDWAPLPL (269 aa)) is the tr-type G domain. GTP is bound by residues 18–25 (SHPDAGKT), 86–90 (DTPGH), and 140–143 (NKLD).

Belongs to the TRAFAC class translation factor GTPase superfamily. Classic translation factor GTPase family. PrfC subfamily.

The protein resides in the cytoplasm. Increases the formation of ribosomal termination complexes and stimulates activities of RF-1 and RF-2. It binds guanine nucleotides and has strong preference for UGA stop codons. It may interact directly with the ribosome. The stimulation of RF-1 and RF-2 is significantly reduced by GTP and GDP, but not by GMP. The chain is Peptide chain release factor 3 from Pseudomonas fluorescens (strain ATCC BAA-477 / NRRL B-23932 / Pf-5).